Reading from the N-terminus, the 357-residue chain is Homoserine O-succinyltransferase (357 aa).

Residue cysteine 146 is the Acyl-thioester intermediate of the active site. Positions 167 and 196 each coordinate substrate. Histidine 239 functions as the Proton acceptor in the catalytic mechanism. Glutamate 241 is an active-site residue. Arginine 253 is a substrate binding site.

Belongs to the MetA family.

It localises to the cytoplasm. It catalyses the reaction L-homoserine + succinyl-CoA = O-succinyl-L-homoserine + CoA. It functions in the pathway amino-acid biosynthesis; L-methionine biosynthesis via de novo pathway; O-succinyl-L-homoserine from L-homoserine: step 1/1. In terms of biological role, transfers a succinyl group from succinyl-CoA to L-homoserine, forming succinyl-L-homoserine. The protein is Homoserine O-succinyltransferase of Allochromatium vinosum (strain ATCC 17899 / DSM 180 / NBRC 103801 / NCIMB 10441 / D) (Chromatium vinosum).